The primary structure comprises 725 residues: Glutamine-dependent NAD(+) synthetase (725 aa).

One can recognise a CN hydrolase domain in the interval 4 to 274 (LKVATCNLNQ…VEVIISQVDL (271 aa)). Residue E44 is the Proton acceptor; for glutaminase activity of the active site. The For glutaminase activity role is filled by K113. Residue C174 is the Nucleophile; for glutaminase activity of the active site. The interval 324 to 709 (YHSPQEEIAF…FPEEEANSNK (386 aa)) is ligase. 354 to 361 (PLSGGADS) is an ATP binding site. The active site involves S356.

The protein in the C-terminal section; belongs to the NAD synthetase family.

The enzyme catalyses deamido-NAD(+) + L-glutamine + ATP + H2O = L-glutamate + AMP + diphosphate + NAD(+) + H(+). It participates in cofactor biosynthesis; NAD(+) biosynthesis; NAD(+) from deamido-NAD(+) (L-Gln route): step 1/1. This is Glutamine-dependent NAD(+) synthetase from Arabidopsis thaliana (Mouse-ear cress).